The following is a 1405-amino-acid chain: Tonsoku-like protein (1405 aa).

7 TPR repeats span residues 23–56 (AVSC…YASM), 63–96 (AKAK…AKRL), 163–196 (ARCY…SKTH), 203–237 (HLCY…AKRF), 245–278 (CETL…NTPD), 314–347 (KGLY…AELN), and 355–388 (VPIY…NQDA). An LRR 1 repeat occupies 153–181 (ISKLEQLDMQARCYLNIGVVKEHMEAFQE). Residues 439–465 (MVRLRRLMLKHNMQVLVENLEADATAK) form an LRR 2 repeat. The segment at 465-535 (KGIDLDQEES…RGNRTLVIKK (71 aa)) is disordered. Positions 469-483 (LDQEESVGDDEEESD) are enriched in acidic residues. 3 ANK repeats span residues 538–567 (KGET…TVNV), 571–600 (AGWL…ASAI), and 609–638 (DGIT…DATV). Disordered stretches follow at residues 695–753 (FNAK…KEYR), 806–827 (KRIN…DTAL), and 841–880 (TPEN…KKHQ). Residues Ser-707 and Ser-709 each carry the phosphoserine modification. Residues 813 to 822 (LSRRTSKENF) are compositionally biased toward basic and acidic residues. A compositionally biased stretch (polar residues) spans 841-850 (TPENEYSQRQ). Over residues 859-874 (SRSSSMSSNHSSSATS) the composition is skewed to low complexity. Residues Ser-893, Ser-895, Ser-899, and Ser-902 each carry the phosphoserine modification. 6 LRR repeats span residues 1085–1108 (QARL…QLAK), 1113–1137 (LLQL…LLCG), 1143–1166 (LELL…ILSK), 1186–1211 (LTEL…QLTQ), 1287–1311 (AKQL…YILD), and 1333–1357 (LQKL…VFSM).

This sequence belongs to the Tonsoku family.

It is found in the nucleus. The protein localises to the nucleoplasm. Its subcellular location is the chromosome. Its function is as follows. Histone reader involved in homologous recombination-mediated repair of double-strand breaks (DSBs) at stalled or collapsed replication forks. Specifically recognizes and binds histone H3.1. The protein is Tonsoku-like protein of Drosophila melanogaster (Fruit fly).